Here is a 747-residue protein sequence, read N- to C-terminus: Probable cyclic nucleotide-gated ion channel 6 (747 aa).

Topologically, residues 1–117 are cytoplasmic; it reads MFDTCGPKGV…DKFLLLCNKL (117 aa). Residues 118-138 traverse the membrane as a helical segment; sequence FVASCILAVSVDPLFLYLPFI. At 139 to 150 the chain is on the extracellular side; that stretch reads NDKAKCVGIDRK. Residues 151 to 171 traverse the membrane as a helical segment; it reads LAIIVTTIRTVIDSFYLFHMA. Topologically, residues 172-205 are cytoplasmic; sequence LRFRTAYVAPSSRVFGRGELVIDPAQIAKRYLQQ. Residues 206–226 form a helical membrane-spanning segment; sequence YFIIDLLSVLPVPQIIVWRFL. The Extracellular portion of the chain corresponds to 227–239; it reads YTSRGANVLATKQ. Residues 240–260 traverse the membrane as a helical segment; the sequence is ALRYIVLVQYIPRFLRMYPLS. At 261–280 the chain is on the cytoplasmic side; the sequence is SELKRTAGVFAETAWAGAAY. A helical transmembrane segment spans residues 281 to 301; it reads YLLLYMLASHIVGALWYLLAL. At 302-407 the chain is on the extracellular side; sequence ERNNDCWSKA…GQGLETSTYP (106 aa). Residues 408 to 428 form a helical membrane-spanning segment; it reads GEVIFSITLAIAGLLLFALLI. The Cytoplasmic portion of the chain corresponds to 429–747; sequence GNMQTYLQSL…PEPDFSAEDH (319 aa). Residues 514-638 and Asp-585 contribute to the a nucleoside 3',5'-cyclic phosphate site; that span reads LFEN…SRQV. Residues 630-645 form a calmodulin-binding region; it reads FRRLHSRQVQHTFRFY. Residues 650-679 form the IQ domain; the sequence is RTWAACFMQAAWRRYIKRKKLEQLRKEEEE.

This sequence belongs to the cyclic nucleotide-gated cation channel (TC 1.A.1.5) family. Homotetramer or heterotetramer.

Its subcellular location is the cell membrane. Its function is as follows. Probable cyclic nucleotide-gated ion channel. In Arabidopsis thaliana (Mouse-ear cress), this protein is Probable cyclic nucleotide-gated ion channel 6 (CNGC6).